A 211-amino-acid chain; its full sequence is Small ribosomal subunit protein uS3 (211 aa).

Residues leucine 38 to lysine 106 enclose the KH type-2 domain.

Belongs to the universal ribosomal protein uS3 family. Part of the 30S ribosomal subunit. Forms a tight complex with proteins S10 and S14.

Its function is as follows. Binds the lower part of the 30S subunit head. Binds mRNA in the 70S ribosome, positioning it for translation. This is Small ribosomal subunit protein uS3 from Ehrlichia ruminantium (strain Gardel).